The following is a 105-amino-acid chain: Cyclotide vibi-J (105 aa).

An N-terminal signal peptide occupies residues 1 to 9; it reads AAFALPALA. Residues 10–71 constitute a propeptide that is removed on maturation; sequence TSFEKDFITH…KSSNSINALG (62 aa). The segment at residues 72–102 is a cross-link (cyclopeptide (Gly-Asn)); that stretch reads GTFPCGESCVWIPCISKVIGCACKSKVCYKN. Intrachain disulfides connect Cys76-Cys92, Cys80-Cys94, and Cys85-Cys99. A propeptide spanning residues 103 to 105 is cleaved from the precursor; that stretch reads SLA.

In terms of processing, this is a cyclic peptide.

Functionally, probably participates in a plant defense mechanism. The polypeptide is Cyclotide vibi-J (Viola biflora (Yellow wood violet)).